Consider the following 41-residue polypeptide: Large ribosomal subunit protein bL36 (41 aa).

This sequence belongs to the bacterial ribosomal protein bL36 family.

The protein is Large ribosomal subunit protein bL36 of Gluconacetobacter diazotrophicus (strain ATCC 49037 / DSM 5601 / CCUG 37298 / CIP 103539 / LMG 7603 / PAl5).